A 472-amino-acid polypeptide reads, in one-letter code: MTDPRILSLQQAVPALRLKTEPADLEHYGRDWTRRWTPNPLAIALPGSVEEVQAVVRWANAQAVAVVPSGGRTGLSGGAVAANGELVLSLERLNKPLDFNAVDRTLTVQAGMPLEAVHNAAREQGLVYPVDFAARGSCSIGGNIATNAGGIRVIRYGNTREWVAGLKVVTGSGELLELNNALVKNSSGYDFRHLMIGSEGTLGIVVEATLRLTDPPPPSNVMLLALPSFDVLMQVFAAFRAQLRLEAFEFFTDRALEHVLAHGAQAPFAEIHPYYVVTEFAAGDEAQEAAAMAAFETCMEQGWVSDGVISQSDAQAAQLWRLREGITEALARYTPYKNDVSVRISAMPAFLAETQALLHDAYPDFDVVWFGHIGDGNLHINVLKPDATSQADFVAACDQVTKLLAQALQRFDGSISAEHGIGLVKKSYLWSTRSAEEIALMRGIKHVLDPHLLLNPGKLFETHDAPTNIPAG.

An FAD-binding PCMH-type domain is found at 36–215; that stretch reads WTPNPLAIAL…VEATLRLTDP (180 aa). (R)-2-hydroxyglutarate-binding residues include R323, T327, and K337. (R)-malate is bound by residues R323, T327, and K337. Residues H372 and H379 each coordinate Zn(2+). Residue N381 participates in (R)-2-hydroxyglutarate binding. E418 is a Zn(2+) binding site. H419 lines the (R)-2-hydroxyglutarate pocket. Residue H419 participates in (R)-malate binding.

The protein belongs to the FAD-binding oxidoreductase/transferase type 4 family. In terms of assembly, homodimer. It depends on FAD as a cofactor.

The enzyme catalyses (R)-2-hydroxyglutarate + A = 2-oxoglutarate + AH2. It carries out the reaction (R)-malate + A = oxaloacetate + AH2. With respect to regulation, activated by Zn(2+) ions. Catalyzes the dehydrogenation of (R)-2-hydroxyglutarate (D-2-hydroxyglutarate) to 2-oxoglutarate. Also has a low activity on D-malate in vitro. Is functionally tied to L-serine biosynthesis, via its coupling with the D-3-phosphoglycerate dehydrogenase SerA, encoded by the adjacent gene in the locus. Active in vitro with the artificial electron acceptor 2,6-dichlorophenolindophenol (DCPIP), but not with NAD, NADP, or cytochrome c. Also displays a very low oxidase activity in vitro on D-2-hydroxyglutarate and L-2-hydroxyglutarate with O2 as the electron acceptor, but this activity is most likely not physiological. The polypeptide is D-2-hydroxyglutarate dehydrogenase (Xanthomonas citri pv. viticola (strain LMG 965 / NCPPB 2475 / ICMP 3867 / CFBP 7660) (Xanthomonas campestris pv. viticola)).